A 266-amino-acid chain; its full sequence is Small ribosomal subunit protein eS1 (266 aa).

The tract at residues 235–266 (GGAGGAAKASGDDTGAKVERADGYEPPIQETV) is disordered. The segment covering 244 to 257 (SGDDTGAKVERADG) has biased composition (basic and acidic residues).

Belongs to the eukaryotic ribosomal protein eS1 family. In terms of assembly, component of the small ribosomal subunit. Mature ribosomes consist of a small (40S) and a large (60S) subunit. The 40S subunit contains about 33 different proteins and 1 molecule of RNA (18S). The 60S subunit contains about 49 different proteins and 3 molecules of RNA (28S, 5.8S and 5S).

It is found in the cytoplasm. Functionally, component of the small ribosomal subunit. The ribosome is a large ribonucleoprotein complex responsible for the synthesis of proteins in the cell. In Oryzias latipes (Japanese rice fish), this protein is Small ribosomal subunit protein eS1 (rps3a).